A 465-amino-acid polypeptide reads, in one-letter code: Adenosylhomocysteinase (465 aa).

Substrate is bound by residues T56, D131, and E191. 192 to 194 is a binding site for NAD(+); the sequence is TTT. Residues K221 and D225 each contribute to the substrate site. Residues N226, 255 to 260, E278, N313, 334 to 336, and N379 each bind NAD(+); these read GYGNVG and IGH.

The protein belongs to the adenosylhomocysteinase family. It depends on NAD(+) as a cofactor.

The protein localises to the cytoplasm. The enzyme catalyses S-adenosyl-L-homocysteine + H2O = L-homocysteine + adenosine. It functions in the pathway amino-acid biosynthesis; L-homocysteine biosynthesis; L-homocysteine from S-adenosyl-L-homocysteine: step 1/1. Functionally, may play a key role in the regulation of the intracellular concentration of adenosylhomocysteine. This is Adenosylhomocysteinase from Bartonella quintana (strain Toulouse) (Rochalimaea quintana).